The following is a 716-amino-acid chain: DNA ligase (716 aa).

NAD(+) contacts are provided by residues 42-46, 91-92, and E125; these read DAEYD and SL. Catalysis depends on K127, which acts as the N6-AMP-lysine intermediate. Residues R148, E184, K300, and K324 each contribute to the NAD(+) site. 4 residues coordinate Zn(2+): C429, C432, C447, and C453. The 79-residue stretch at 638 to 716 folds into the BRCT domain; it reads TASSPIAGKI…EEAWLQLIEG (79 aa).

The protein belongs to the NAD-dependent DNA ligase family. LigA subfamily. Mg(2+) serves as cofactor. The cofactor is Mn(2+).

The enzyme catalyses NAD(+) + (deoxyribonucleotide)n-3'-hydroxyl + 5'-phospho-(deoxyribonucleotide)m = (deoxyribonucleotide)n+m + AMP + beta-nicotinamide D-nucleotide.. Functionally, DNA ligase that catalyzes the formation of phosphodiester linkages between 5'-phosphoryl and 3'-hydroxyl groups in double-stranded DNA using NAD as a coenzyme and as the energy source for the reaction. It is essential for DNA replication and repair of damaged DNA. This Bartonella henselae (strain ATCC 49882 / DSM 28221 / CCUG 30454 / Houston 1) (Rochalimaea henselae) protein is DNA ligase.